A 292-amino-acid chain; its full sequence is Tumor necrosis factor alpha-induced protein 8-like protein 3 (292 aa).

The segment at 81 to 107 is disordered; sequence DAQPAARSMDSDSGEQSEGEPVTAAGP. Residues 109–292 form a binding to phosphoinositides region; it reads VFSSKSLALQ…INKLLDEKVL (184 aa).

The protein belongs to the TNFAIP8 family. Widely expressed (at protein level). Highly expressed in most carcinoma cell lines.

It localises to the cytoplasm. The protein resides in the cell membrane. Its function is as follows. Acts as a lipid transfer protein. Preferentially captures and shuttles two lipid second messengers, i.e., phosphatidylinositol 4,5- bisphosphate and phosphatidylinositol 3,4,5-trisphosphate and increases their levels in the plasma membrane. Additionally, may also function as a lipid-presenting protein to enhance the activity of the PI3K-AKT and MEK-ERK pathways. May act as a regulator of tumorigenesis through its activation of phospholipid signaling. This Homo sapiens (Human) protein is Tumor necrosis factor alpha-induced protein 8-like protein 3 (TNFAIP8L3).